Here is a 134-residue protein sequence, read N- to C-terminus: NADH-quinone oxidoreductase subunit A (134 aa).

The next 3 helical transmembrane spans lie at 12–32, 64–84, and 93–113; these read FAIYVIGAIAICLTMIGLAAL, FYLVAMFFVIFDVEALYLFAW, and WVGFIEATIFIGLLLIGLVYL.

Belongs to the complex I subunit 3 family. NDH-1 is composed of 13 different subunits. Subunits NuoA, H, J, K, L, M, N constitute the membrane sector of the complex.

It is found in the cell inner membrane. It catalyses the reaction a quinone + NADH + 5 H(+)(in) = a quinol + NAD(+) + 4 H(+)(out). Functionally, NDH-1 shuttles electrons from NADH, via FMN and iron-sulfur (Fe-S) centers, to quinones in the respiratory chain. The immediate electron acceptor for the enzyme in this species is believed to be ubiquinone. Couples the redox reaction to proton translocation (for every two electrons transferred, four hydrogen ions are translocated across the cytoplasmic membrane), and thus conserves the redox energy in a proton gradient. In Shewanella oneidensis (strain ATCC 700550 / JCM 31522 / CIP 106686 / LMG 19005 / NCIMB 14063 / MR-1), this protein is NADH-quinone oxidoreductase subunit A.